The sequence spans 94 residues: Ribonuclease P protein component 1 (94 aa).

Belongs to the eukaryotic/archaeal RNase P protein component 1 family. Consists of a catalytic RNA component and at least 4-5 protein subunits.

The protein localises to the cytoplasm. The enzyme catalyses Endonucleolytic cleavage of RNA, removing 5'-extranucleotides from tRNA precursor.. Its function is as follows. Part of ribonuclease P, a protein complex that generates mature tRNA molecules by cleaving their 5'-ends. The chain is Ribonuclease P protein component 1 from Haloarcula marismortui (strain ATCC 43049 / DSM 3752 / JCM 8966 / VKM B-1809) (Halobacterium marismortui).